The primary structure comprises 203 residues: MTAPRRFAGDTLVIASHNRGKVREIADLLAAHVRHFPSAAELDLPEPEETEATFIGNAALKARAAALASGLPALADDSGLWVDALDGAPGIYSARWAGPEKDFGAAMERVRRELEAAADRRGDRARFVCALALAWPDGHVEAVEGTAHGTLTFPPRGGKGFGYDPVFIPDGHACTYAELDPAHKHAISHRADAFRQLLARCFA.

16 to 21 (SHNRGK) contributes to the substrate binding site. Residues E48 and D77 each contribute to the Mg(2+) site. The Proton acceptor role is filled by D77. Residues S78, 161–164 (FGYD), K184, and 189–190 (HR) each bind substrate.

The protein belongs to the HAM1 NTPase family. In terms of assembly, homodimer. It depends on Mg(2+) as a cofactor.

The catalysed reaction is XTP + H2O = XMP + diphosphate + H(+). The enzyme catalyses dITP + H2O = dIMP + diphosphate + H(+). It catalyses the reaction ITP + H2O = IMP + diphosphate + H(+). Its function is as follows. Pyrophosphatase that catalyzes the hydrolysis of nucleoside triphosphates to their monophosphate derivatives, with a high preference for the non-canonical purine nucleotides XTP (xanthosine triphosphate), dITP (deoxyinosine triphosphate) and ITP. Seems to function as a house-cleaning enzyme that removes non-canonical purine nucleotides from the nucleotide pool, thus preventing their incorporation into DNA/RNA and avoiding chromosomal lesions. This is dITP/XTP pyrophosphatase from Rhodospirillum centenum (strain ATCC 51521 / SW).